Reading from the N-terminus, the 1414-residue chain is DNA-directed RNA polymerase subunit beta' (1414 aa).

Residues Cys-72, Cys-74, Cys-87, and Cys-90 each contribute to the Zn(2+) site. Mg(2+) is bound by residues Asp-463, Asp-465, and Asp-467. Zn(2+) contacts are provided by Cys-811, Cys-885, Cys-892, and Cys-895.

Belongs to the RNA polymerase beta' chain family. As to quaternary structure, the RNAP catalytic core consists of 2 alpha, 1 beta, 1 beta' and 1 omega subunit. When a sigma factor is associated with the core the holoenzyme is formed, which can initiate transcription. Requires Mg(2+) as cofactor. The cofactor is Zn(2+).

It catalyses the reaction RNA(n) + a ribonucleoside 5'-triphosphate = RNA(n+1) + diphosphate. DNA-dependent RNA polymerase catalyzes the transcription of DNA into RNA using the four ribonucleoside triphosphates as substrates. This is DNA-directed RNA polymerase subunit beta' from Roseobacter denitrificans (strain ATCC 33942 / OCh 114) (Erythrobacter sp. (strain OCh 114)).